Here is a 345-residue protein sequence, read N- to C-terminus: Trace amine-associated receptor 6 (345 aa).

Residues methionine 1–arginine 32 lie on the Extracellular side of the membrane. Asparagine 17 carries N-linked (GlcNAc...) asparagine glycosylation. Intrachain disulfides connect cysteine 22-cysteine 186 and cysteine 105-cysteine 190. The helical transmembrane segment at valine 33–valine 53 threads the bilayer. Topologically, residues methionine 54 to asparagine 68 are cytoplasmic. Residues phenylalanine 69–serine 89 traverse the membrane as a helical segment. Residues methionine 90–phenylalanine 107 are Extracellular-facing. The helical transmembrane segment at histidine 108–isoleucine 128 threads the bilayer. The Cytoplasmic segment spans residues aspartate 129 to serine 147. A helical transmembrane segment spans residues valine 148–phenylalanine 168. The Extracellular segment spans residues tyrosine 169–aspartate 202. Positions aspartate 174–valine 187 are extracellular Loop 2 (ECL2). A helical transmembrane segment spans residues phenylalanine 203–valine 223. The Cytoplasmic segment spans residues alanine 224–threonine 259. Residues leucine 260–isoleucine 276 form a helical membrane-spanning segment. The Extracellular segment spans residues aspartate 277 to alanine 282. A helical membrane pass occupies residues phenylalanine 283–tyrosine 302. The Cytoplasmic segment spans residues asparagine 303–isoleucine 345.

The protein belongs to the G-protein coupled receptor 1 family. As to expression, specifically expressed in neurons of the olfactory epithelium, to discrete glomeruli predominantly localized to a confined bulb region. Present in a ventral area of the main olfactory epithelium.

It is found in the cell membrane. Olfactory receptor specific for trace amines, such as beta-phenylethylamine (beta-PEA). Trace amine compounds are enriched in animal body fluids and act on trace amine-associated receptors (TAARs) to elicit both intraspecific and interspecific innate behaviors. Beta-PEA-binding causes a conformation change that triggers signaling via G(s)-class of G alpha proteins (GNAL or GNAS). This is Trace amine-associated receptor 6 from Mus musculus (Mouse).